A 146-amino-acid chain; its full sequence is Hemoglobin subunit beta (146 aa).

The residue at position 1 (valine 1) is an N-acetylvaline. Positions 2–146 (HLTDAEKALV…VATALAHKYH (145 aa)) constitute a Globin domain. Threonine 12 is subject to Phosphothreonine. Position 44 is a phosphoserine (serine 44). Lysine 59 is subject to N6-acetyllysine. Histidine 63 is a heme b binding site. Lysine 82 bears the N6-acetyllysine mark. Histidine 92 is a heme b binding site. Cysteine 93 is subject to S-nitrosocysteine. At lysine 144 the chain carries N6-acetyllysine.

It belongs to the globin family. As to quaternary structure, heterotetramer of two alpha chains and two beta chains. As to expression, red blood cells.

Its function is as follows. Involved in oxygen transport from the lung to the various peripheral tissues. In Peromyscus californicus (California mouse), this protein is Hemoglobin subunit beta.